The sequence spans 212 residues: Pyridoxine/pyridoxamine 5'-phosphate oxidase (212 aa).

Residues 8–11 (RREY) and K66 each bind substrate. Residues 61–66 (RIVLLK), 76–77 (FT), R82, K83, and Q105 contribute to the FMN site. The substrate site is built by Y123, R127, and S131. FMN-binding positions include 140–141 (QS) and W185. 191–193 (RLH) serves as a coordination point for substrate. Residue R195 participates in FMN binding.

Belongs to the pyridoxamine 5'-phosphate oxidase family. Homodimer. It depends on FMN as a cofactor.

The catalysed reaction is pyridoxamine 5'-phosphate + O2 + H2O = pyridoxal 5'-phosphate + H2O2 + NH4(+). The enzyme catalyses pyridoxine 5'-phosphate + O2 = pyridoxal 5'-phosphate + H2O2. It participates in cofactor metabolism; pyridoxal 5'-phosphate salvage; pyridoxal 5'-phosphate from pyridoxamine 5'-phosphate: step 1/1. Its pathway is cofactor metabolism; pyridoxal 5'-phosphate salvage; pyridoxal 5'-phosphate from pyridoxine 5'-phosphate: step 1/1. Catalyzes the oxidation of either pyridoxine 5'-phosphate (PNP) or pyridoxamine 5'-phosphate (PMP) into pyridoxal 5'-phosphate (PLP). The sequence is that of Pyridoxine/pyridoxamine 5'-phosphate oxidase from Shewanella frigidimarina (strain NCIMB 400).